Reading from the N-terminus, the 352-residue chain is Protein RecA (352 aa).

67 to 74 (GPESSGKT) lines the ATP pocket. The disordered stretch occupies residues 330–352 (STPKPEAESQEKAAAAQDDDSLV).

It belongs to the RecA family.

The protein resides in the cytoplasm. In terms of biological role, can catalyze the hydrolysis of ATP in the presence of single-stranded DNA, the ATP-dependent uptake of single-stranded DNA by duplex DNA, and the ATP-dependent hybridization of homologous single-stranded DNAs. It interacts with LexA causing its activation and leading to its autocatalytic cleavage. The polypeptide is Protein RecA (Chromohalobacter salexigens (strain ATCC BAA-138 / DSM 3043 / CIP 106854 / NCIMB 13768 / 1H11)).